Here is a 1024-residue protein sequence, read N- to C-terminus: Carbamoyl phosphate synthase large chain (1024 aa).

The interval 1–402 (MPKRTDLQTI…SLQKALRSTE (402 aa)) is carboxyphosphate synthetic domain. Arg-129, Arg-169, Gly-175, Gly-176, Glu-208, Ile-210, Glu-215, Gly-241, Val-242, His-243, Gln-285, and Glu-299 together coordinate ATP. The ATP-grasp 1 domain occupies 133 to 328 (QAAMKKIGVE…IAKIAALLAV (196 aa)). The Mg(2+) site is built by Gln-285, Glu-299, and Asn-301. Mn(2+)-binding residues include Gln-285, Glu-299, and Asn-301. The interval 403 to 546 (GDIRGVYAEM…YSTYEWEDEV (144 aa)) is oligomerization domain. The interval 547 to 929 (APTDKPKVVI…AFYRAQLGAK (383 aa)) is carbamoyl phosphate synthetic domain. An ATP-grasp 2 domain is found at 671-863 (NALCERLGLP…LAKSAARIAA (193 aa)). Positions 707, 747, 749, 754, 779, 780, 781, 782, 822, and 834 each coordinate ATP. Mg(2+) contacts are provided by Gln-822, Glu-834, and Asn-836. Mn(2+)-binding residues include Gln-822, Glu-834, and Asn-836. An MGS-like domain is found at 930–1024 (NYLPLEGTAL…GVRSLQEWVK (95 aa)). Residues 930 to 1024 (NYLPLEGTAL…GVRSLQEWVK (95 aa)) form an allosteric domain region.

This sequence belongs to the CarB family. Composed of two chains; the small (or glutamine) chain promotes the hydrolysis of glutamine to ammonia, which is used by the large (or ammonia) chain to synthesize carbamoyl phosphate. Tetramer of heterodimers (alpha,beta)4. It depends on Mg(2+) as a cofactor. Mn(2+) serves as cofactor.

The catalysed reaction is hydrogencarbonate + L-glutamine + 2 ATP + H2O = carbamoyl phosphate + L-glutamate + 2 ADP + phosphate + 2 H(+). It carries out the reaction hydrogencarbonate + NH4(+) + 2 ATP = carbamoyl phosphate + 2 ADP + phosphate + 2 H(+). Its pathway is amino-acid biosynthesis; L-arginine biosynthesis; carbamoyl phosphate from bicarbonate: step 1/1. The protein operates within pyrimidine metabolism; UMP biosynthesis via de novo pathway; (S)-dihydroorotate from bicarbonate: step 1/3. Its function is as follows. Large subunit of the glutamine-dependent carbamoyl phosphate synthetase (CPSase). CPSase catalyzes the formation of carbamoyl phosphate from the ammonia moiety of glutamine, carbonate, and phosphate donated by ATP, constituting the first step of 2 biosynthetic pathways, one leading to arginine and/or urea and the other to pyrimidine nucleotides. The large subunit (synthetase) binds the substrates ammonia (free or transferred from glutamine from the small subunit), hydrogencarbonate and ATP and carries out an ATP-coupled ligase reaction, activating hydrogencarbonate by forming carboxy phosphate which reacts with ammonia to form carbamoyl phosphate. In Deinococcus radiodurans (strain ATCC 13939 / DSM 20539 / JCM 16871 / CCUG 27074 / LMG 4051 / NBRC 15346 / NCIMB 9279 / VKM B-1422 / R1), this protein is Carbamoyl phosphate synthase large chain.